Consider the following 476-residue polypeptide: Glutamate--tRNA ligase 1 (476 aa).

Positions 9–19 match the 'HIGH' region motif; that stretch reads PSPTGFLHIGG. The short motif at 238 to 242 is the 'KMSKS' region element; sequence KLSKR. Lys241 contributes to the ATP binding site.

Belongs to the class-I aminoacyl-tRNA synthetase family. Glutamate--tRNA ligase type 1 subfamily. As to quaternary structure, monomer.

It localises to the cytoplasm. The catalysed reaction is tRNA(Glu) + L-glutamate + ATP = L-glutamyl-tRNA(Glu) + AMP + diphosphate. Functionally, catalyzes the attachment of glutamate to tRNA(Glu) in a two-step reaction: glutamate is first activated by ATP to form Glu-AMP and then transferred to the acceptor end of tRNA(Glu). This chain is Glutamate--tRNA ligase 1, found in Bartonella bacilliformis (strain ATCC 35685 / KC583 / Herrer 020/F12,63).